The chain runs to 400 residues: Cytohesin-3 (400 aa).

A coiled-coil region spans residues 14–61 (EDLSLEEREELLDIRRRKKELIDDIERLKYEIAEVMTEIDNLTSVEES). Residues 77-206 (FNMDPKKGIQ…IIMLNTSLHN (130 aa)) form the SEC7 domain. The PH domain occupies 265-381 (PDREGWLLKL…WMKSIKASIS (117 aa)). Residues 273 to 281 (KLGGGRVKT), arginine 285, tyrosine 296, arginine 306, and asparagine 355 each bind a 1,2-diacyl-sn-glycero-3-phospho-(1D-myo-inositol-3,4,5-trisphosphate). Residues 392 to 400 (RKRRIANKK) are C-terminal autoinhibitory region.

As to quaternary structure, interacts with TAMALIN. In terms of tissue distribution, present in all tissues tested, with highest protein levels in brain and adrenal.

It localises to the cytoplasm. It is found in the cytosol. The protein resides in the cell membrane. Its function is as follows. Promotes guanine-nucleotide exchange on ARF1. Promotes the activation of ARF factors through replacement of GDP with GTP. This chain is Cytohesin-3 (Cyth3), found in Rattus norvegicus (Rat).